A 138-amino-acid chain; its full sequence is Augmin complex subunit msd1 (138 aa).

As to quaternary structure, component of the augmin complex composed of dgt2, dgt3, dgt4, dgt5, dgt6, msd1, msd5 and wac. The complex interacts directly or indirectly with microtubules and is required for centrosome-independent generation of spindle microtubules.

It localises to the cytoplasm. It is found in the cytoskeleton. Its subcellular location is the spindle. Functionally, as part of the augmin complex, plays a role in centrosome-independent generation of spindle microtubules. The complex is required for mitotic spindle assembly through its involvement in localizing gamma-tubulin to spindle microtubules. msd1 is required for microtubule nucleation from within the mitotic spindle and for localization of Grip71 to centrosomes and mitotic spindle. This chain is Augmin complex subunit msd1, found in Drosophila melanogaster (Fruit fly).